Reading from the N-terminus, the 137-residue chain is Nucleoside diphosphate kinase (137 aa).

ATP is bound by residues Lys9, Phe57, Arg85, Thr91, Arg102, and Asn112. His115 (pros-phosphohistidine intermediate) is an active-site residue.

It belongs to the NDK family. Homotetramer. The cofactor is Mg(2+).

The protein localises to the cytoplasm. The catalysed reaction is a 2'-deoxyribonucleoside 5'-diphosphate + ATP = a 2'-deoxyribonucleoside 5'-triphosphate + ADP. It catalyses the reaction a ribonucleoside 5'-diphosphate + ATP = a ribonucleoside 5'-triphosphate + ADP. In terms of biological role, major role in the synthesis of nucleoside triphosphates other than ATP. The ATP gamma phosphate is transferred to the NDP beta phosphate via a ping-pong mechanism, using a phosphorylated active-site intermediate. This Geobacter sulfurreducens (strain ATCC 51573 / DSM 12127 / PCA) protein is Nucleoside diphosphate kinase.